The following is a 670-amino-acid chain: DNA ligase (670 aa).

NAD(+) is bound by residues 33-37 (DAEFD), 82-83 (SL), and Glu-113. The active-site N6-AMP-lysine intermediate is Lys-115. NAD(+)-binding residues include Arg-136, Glu-170, Lys-285, and Lys-309. Zn(2+)-binding residues include Cys-403, Cys-406, Cys-421, and Cys-427. Residues 587-670 (EQNLYLSGKT…EVLKAGDNNG (84 aa)) enclose the BRCT domain.

This sequence belongs to the NAD-dependent DNA ligase family. LigA subfamily. Mg(2+) is required as a cofactor. It depends on Mn(2+) as a cofactor.

The enzyme catalyses NAD(+) + (deoxyribonucleotide)n-3'-hydroxyl + 5'-phospho-(deoxyribonucleotide)m = (deoxyribonucleotide)n+m + AMP + beta-nicotinamide D-nucleotide.. DNA ligase that catalyzes the formation of phosphodiester linkages between 5'-phosphoryl and 3'-hydroxyl groups in double-stranded DNA using NAD as a coenzyme and as the energy source for the reaction. It is essential for DNA replication and repair of damaged DNA. The protein is DNA ligase of Halothermothrix orenii (strain H 168 / OCM 544 / DSM 9562).